The primary structure comprises 271 residues: 2-dehydro-3-deoxyphosphooctonate aldolase (271 aa).

It belongs to the KdsA family.

Its subcellular location is the cytoplasm. It catalyses the reaction D-arabinose 5-phosphate + phosphoenolpyruvate + H2O = 3-deoxy-alpha-D-manno-2-octulosonate-8-phosphate + phosphate. Its pathway is carbohydrate biosynthesis; 3-deoxy-D-manno-octulosonate biosynthesis; 3-deoxy-D-manno-octulosonate from D-ribulose 5-phosphate: step 2/3. It functions in the pathway bacterial outer membrane biogenesis; lipopolysaccharide biosynthesis. The sequence is that of 2-dehydro-3-deoxyphosphooctonate aldolase from Campylobacter jejuni subsp. jejuni serotype O:23/36 (strain 81-176).